A 145-amino-acid chain; its full sequence is Large ribosomal subunit protein uL15 (145 aa).

A disordered region spans residues 1–54; that stretch reads MKLNELKYTPGSKKEATRVGRGMASGKGKTATRGHKGQNSRSGGGVRPGFEGGQ. Residues 42-52 show a composition bias toward gly residues; that stretch reads SGGGVRPGFEG.

Belongs to the universal ribosomal protein uL15 family. Part of the 50S ribosomal subunit.

In terms of biological role, binds to the 23S rRNA. This chain is Large ribosomal subunit protein uL15, found in Mycoplasma capricolum subsp. capricolum (strain California kid / ATCC 27343 / NCTC 10154).